A 112-amino-acid polypeptide reads, in one-letter code: MEKKELYDGFLTLEKHAQQMLREIAAMKDDMAETLERNAELEIENKHLRQHLAELEKDDNKTSDGGVELSKSKQNLESLYNEGFHVCPMFYGQRRVNDEPCAFCTEIIYGEN.

Residues His85, Cys87, Cys101, and Cys104 each coordinate Zn(2+).

Belongs to the YabA family. As to quaternary structure, homotetramer. Interacts with both DnaA and DnaN, acting as a bridge between these two proteins. The cofactor is Zn(2+).

Its subcellular location is the cytoplasm. It is found in the nucleoid. In terms of biological role, involved in control of chromosome replication initiation. Inhibits the cooperative binding of DnaA to the oriC region, thus negatively regulating initiation of chromosome replication. Inhibits the ability of DnaA-ATP to form a helix on DNA; does not disassemble preformed DnaA-DNA helices. Decreases the residence time of DnaA on the chromosome at its binding sites (oriC, replication forks and promoter-binding sites). Tethers DnaA to the replication machinery via the DNA polymerase beta sliding clamp subunit (dnaN). Associates with oriC and other DnaA targets on the chromosome in a DnaA-dependent manner. The chain is Replication initiation control protein YabA from Lacticaseibacillus casei (strain BL23) (Lactobacillus casei).